The following is a 153-amino-acid chain: D-aminoacyl-tRNA deacylase (153 aa).

The Gly-cisPro motif, important for rejection of L-amino acids signature appears at 142–143 (GP).

This sequence belongs to the DTD family. Homodimer.

The protein localises to the cytoplasm. The enzyme catalyses glycyl-tRNA(Ala) + H2O = tRNA(Ala) + glycine + H(+). It catalyses the reaction a D-aminoacyl-tRNA + H2O = a tRNA + a D-alpha-amino acid + H(+). Its function is as follows. An aminoacyl-tRNA editing enzyme that deacylates mischarged D-aminoacyl-tRNAs. Also deacylates mischarged glycyl-tRNA(Ala), protecting cells against glycine mischarging by AlaRS. Acts via tRNA-based rather than protein-based catalysis; rejects L-amino acids rather than detecting D-amino acids in the active site. By recycling D-aminoacyl-tRNA to D-amino acids and free tRNA molecules, this enzyme counteracts the toxicity associated with the formation of D-aminoacyl-tRNA entities in vivo and helps enforce protein L-homochirality. The sequence is that of D-aminoacyl-tRNA deacylase from Cupriavidus taiwanensis (strain DSM 17343 / BCRC 17206 / CCUG 44338 / CIP 107171 / LMG 19424 / R1) (Ralstonia taiwanensis (strain LMG 19424)).